Consider the following 178-residue polypeptide: Oligoribonuclease (178 aa).

Residues 7 to 168 form the Exonuclease domain; the sequence is LIWIDLEMTG…DDIRESIAEL (162 aa). Tyrosine 128 is an active-site residue.

It belongs to the oligoribonuclease family.

The protein resides in the cytoplasm. Its function is as follows. 3'-to-5' exoribonuclease specific for small oligoribonucleotides. The polypeptide is Oligoribonuclease (Francisella tularensis subsp. novicida (strain U112)).